A 206-amino-acid polypeptide reads, in one-letter code: uncharacterized protein (206 aa).

Residues 81–132 are disordered; that stretch reads EEQQQQQHHVHGPGCSHGHHHDSHANDGHHDEHHDEHHDHVNPDDVEDEFPR. Positions 82–96 are enriched in low complexity; that stretch reads EQQQQQHHVHGPGCS. Residues 103-123 show a composition bias toward basic and acidic residues; it reads SHANDGHHDEHHDEHHDHVNP. A helical transmembrane segment spans residues 150 to 166; that stretch reads YLTALCLLPIIGSLFSI.

The protein resides in the membrane. This is an uncharacterized protein from Dictyostelium discoideum (Social amoeba).